Here is a 215-residue protein sequence, read N- to C-terminus: MSEAKRLAAEKAIDYVEDGMIVGVGTGSTVAYFIDALGHIGHRIKGAVSSSEQSTARLRQHGIEVLDLNHTGNLSLYVDGADECDPNRCLIKGGGAALTREKIIAEASERFICIVDPSKQVPVLGKFPLPVEVIPMARSLVARQILALTGGQPVWRDVVLTDNGNVVLDVHNLQITDPVALERSLNQIPGVVCVGLFARRPADVVIVGGEPPRVL.

Substrate-binding positions include 26-29 (TGST), 79-82 (DGAD), and 92-95 (KGGG). Residue glutamate 101 is the Proton acceptor of the active site. Lysine 119 provides a ligand contact to substrate.

Belongs to the ribose 5-phosphate isomerase family. Homodimer.

It catalyses the reaction aldehydo-D-ribose 5-phosphate = D-ribulose 5-phosphate. It functions in the pathway carbohydrate degradation; pentose phosphate pathway; D-ribose 5-phosphate from D-ribulose 5-phosphate (non-oxidative stage): step 1/1. Catalyzes the reversible conversion of ribose-5-phosphate to ribulose 5-phosphate. The chain is Ribose-5-phosphate isomerase A from Xanthomonas oryzae pv. oryzae (strain PXO99A).